The following is a 463-amino-acid chain: Putative pentatricopeptide repeat-containing protein At4g17915 (463 aa).

PPR repeat units follow at residues 12–46 (STRL…GVDP), 47–81 (DVVT…GIRP), 82–116 (DVAT…GIYP), 117–152 (DLWS…GLNP), 153–186 (GPDT…RFKP), 187–221 (ELMT…GYTP), 222–256 (NAVT…GYTY), 257–291 (DGYA…GRRH), 292–326 (DIVS…GMKA), 327–361 (DEYT…GIGL), 362–392 (NLVT…MEVK), and 393–427 (DEYT…GIKI).

It belongs to the PPR family. P subfamily.

This is Putative pentatricopeptide repeat-containing protein At4g17915 from Arabidopsis thaliana (Mouse-ear cress).